The primary structure comprises 196 residues: MCLLIKKLYLTFARSTSIIITLVIIDQLSKWWFIDNLRWTPGLMLKVTSFLNMVYTWNYGISFGLMREYYQYSNAIFLITNTLIVCYLYYLMIRSNTIGSFAGYSFVIGGAVGNLIDRCFRGAVFDFIHFHYHNYSFPVFNLADCFITIGVIILIEDYDNTKKVIEEKIKGNYDNAQIEAMAEKIRNTDQGGNDKV.

The next 3 helical transmembrane spans lie at 17-37 (SIII…IDNL), 73-93 (SNAI…YLMI), and 96-116 (NTIG…GNLI). Catalysis depends on residues Asp-126 and Asp-144. Residues 135-155 (YSFPVFNLADCFITIGVIILI) traverse the membrane as a helical segment.

It belongs to the peptidase A8 family.

Its subcellular location is the cell inner membrane. It carries out the reaction Release of signal peptides from bacterial membrane prolipoproteins. Hydrolyzes -Xaa-Yaa-Zaa-|-(S,diacylglyceryl)Cys-, in which Xaa is hydrophobic (preferably Leu), and Yaa (Ala or Ser) and Zaa (Gly or Ala) have small, neutral side chains.. It functions in the pathway protein modification; lipoprotein biosynthesis (signal peptide cleavage). Its function is as follows. This protein specifically catalyzes the removal of signal peptides from prolipoproteins. The polypeptide is Lipoprotein signal peptidase (Rickettsia akari (strain Hartford)).